A 476-amino-acid polypeptide reads, in one-letter code: Probable flippase AglR (476 aa).

A run of 14 helical transmembrane segments spans residues 7–29 (ASALQFGANVTQTFVGAIITIYV), 34–56 (GVGAFGIFALSAALVKWASIPAV), 83–103 (VLTGAIILVGLLALLGYSPFV), 112–132 (TQLVGGMFVSNVSFRLVLGGL), 146–166 (ALWGILSSLVKLALVYTGVGV), 168–188 (ALFYGEITSSIVIGIFGVYSL), 222–242 (WLDTIILGFFVSTSLVGIYEV), 246–266 (ISALFVLLPTAISKSTFPTIS), 287–307 (VAGVLAIPGLVGSVLVGGDIL), 310–330 (YGPSVSSVGVAVSVLVSLSVV), 354–373 (FRIGVIFITTNIILNVSLIP), 377–396 (VIGAAIATLLSMTLGSILAV), 409–429 (VSAIGSQFVSAGAMAVVLFTI), and 439–459 (IEVVLYVLAGATTYGFVLLSL).

Belongs to the AglR/Agl15 family.

The protein resides in the cell membrane. Its pathway is cell surface structure biogenesis; S-layer biogenesis. Its function is as follows. Involved in the assembly of a N-linked pentasaccharide that decorates the S-layer glycoprotein and flagellins. Probably mediates or contributes to the translocation of the dolichol-phosphate-mannose across the membrane. In Haloferax volcanii (strain ATCC 29605 / DSM 3757 / JCM 8879 / NBRC 14742 / NCIMB 2012 / VKM B-1768 / DS2) (Halobacterium volcanii), this protein is Probable flippase AglR (aglR).